The chain runs to 368 residues: 3-dehydroquinate synthase (368 aa).

NAD(+) is bound by residues Asp69–Lys74, Gly103–Asp107, Thr127–Thr128, Lys140, and Lys149. Residues Glu182, His245, and His262 each contribute to the Zn(2+) site.

This sequence belongs to the sugar phosphate cyclases superfamily. Dehydroquinate synthase family. NAD(+) is required as a cofactor. Co(2+) serves as cofactor. The cofactor is Zn(2+).

It is found in the cytoplasm. The catalysed reaction is 7-phospho-2-dehydro-3-deoxy-D-arabino-heptonate = 3-dehydroquinate + phosphate. The protein operates within metabolic intermediate biosynthesis; chorismate biosynthesis; chorismate from D-erythrose 4-phosphate and phosphoenolpyruvate: step 2/7. Its function is as follows. Catalyzes the conversion of 3-deoxy-D-arabino-heptulosonate 7-phosphate (DAHP) to dehydroquinate (DHQ). In Pseudomonas aeruginosa (strain ATCC 15692 / DSM 22644 / CIP 104116 / JCM 14847 / LMG 12228 / 1C / PRS 101 / PAO1), this protein is 3-dehydroquinate synthase.